A 760-amino-acid polypeptide reads, in one-letter code: NAD(P)H-quinone oxidoreductase subunit 5, chloroplastic (760 aa).

16 helical membrane passes run 9–29, 39–59, 89–109, 125–145, 147–167, 185–205, 221–241, 260–280, 282–302, 329–349, 356–376, 398–418, 429–449, 556–576, 620–640, and 734–754; these read WIIS…LLLF, IWAF…IDLF, IDPL…LVLV, FVYM…SNLI, IYIF…FWFT, GDFG…SFEF, NEVH…GAIA, TPIS…FLVA, LLPL…IGII, LGYT…FHLI, ALLF…VGYS, IAFL…CFWS, YSPI…FYMF, ILFP…IGIP, FSVS…KPIY, and FYLL…SSIF.

This sequence belongs to the complex I subunit 5 family. As to quaternary structure, NDH is composed of at least 16 different subunits, 5 of which are encoded in the nucleus.

It is found in the plastid. The protein resides in the chloroplast thylakoid membrane. It carries out the reaction a plastoquinone + NADH + (n+1) H(+)(in) = a plastoquinol + NAD(+) + n H(+)(out). It catalyses the reaction a plastoquinone + NADPH + (n+1) H(+)(in) = a plastoquinol + NADP(+) + n H(+)(out). NDH shuttles electrons from NAD(P)H:plastoquinone, via FMN and iron-sulfur (Fe-S) centers, to quinones in the photosynthetic chain and possibly in a chloroplast respiratory chain. The immediate electron acceptor for the enzyme in this species is believed to be plastoquinone. Couples the redox reaction to proton translocation, and thus conserves the redox energy in a proton gradient. The sequence is that of NAD(P)H-quinone oxidoreductase subunit 5, chloroplastic (ndhF) from Populus trichocarpa (Western balsam poplar).